Consider the following 130-residue polypeptide: Iron-sulfur cluster insertion protein ErpA (130 aa).

Cys58, Cys122, and Cys124 together coordinate iron-sulfur cluster.

The protein belongs to the HesB/IscA family. As to quaternary structure, homodimer. Iron-sulfur cluster serves as cofactor.

Required for insertion of 4Fe-4S clusters for at least IspG. This chain is Iron-sulfur cluster insertion protein ErpA, found in Stenotrophomonas maltophilia (strain K279a).